The primary structure comprises 357 residues: RNA-binding protein 43 (357 aa).

One can recognise an RRM domain in the interval 15-104; the sequence is RTVVVAGLPV…VSLRVSHFGD (90 aa).

In Homo sapiens (Human), this protein is RNA-binding protein 43 (RBM43).